We begin with the raw amino-acid sequence, 292 residues long: Leucine-rich repeat-containing protein 10B (292 aa).

The tract at residues 1–20 (MGIAESTPDELPSDAEEQLR) is disordered. Over residues 7 to 16 (TPDELPSDAE) the composition is skewed to acidic residues. 9 LRR repeats span residues 22–43 (GDQQ…VCAL), 45–66 (RLQK…IEEL), 68–90 (ELRI…CRLP), 91–112 (RLTR…FAQL), 114–136 (SLRC…LRLV), 137–158 (ALQS…LPRM), 160–181 (GLRG…LLRM), 183–204 (RLHI…HPLR), and 205–226 (ALRV…ADTV). Residues 236-261 (RMAERDEPTPRPPPRRPARAFEDEEE) are disordered.

The polypeptide is Leucine-rich repeat-containing protein 10B (LRRC10B) (Homo sapiens (Human)).